Consider the following 109-residue polypeptide: Nucleoid-associated protein Cvib_1034 (109 aa).

The protein belongs to the YbaB/EbfC family. Homodimer.

The protein localises to the cytoplasm. It localises to the nucleoid. In terms of biological role, binds to DNA and alters its conformation. May be involved in regulation of gene expression, nucleoid organization and DNA protection. In Chlorobium phaeovibrioides (strain DSM 265 / 1930) (Prosthecochloris vibrioformis (strain DSM 265)), this protein is Nucleoid-associated protein Cvib_1034.